A 64-amino-acid polypeptide reads, in one-letter code: Large ribosomal subunit protein bL35 (64 aa).

It belongs to the bacterial ribosomal protein bL35 family.

This is Large ribosomal subunit protein bL35 from Shewanella oneidensis (strain ATCC 700550 / JCM 31522 / CIP 106686 / LMG 19005 / NCIMB 14063 / MR-1).